A 368-amino-acid polypeptide reads, in one-letter code: MVVLGSTGSIGKNALKIAKKFKVGIEALSCGKNIALINEQIKVFKPKKVAILDSNDLNGLEPLGAKVFVGLEGIDAMIEECVSNLVINAIVGVAGLRASFKSLQTNKKLALANKESLVSAGHLLDISQITPIDSEHFGLWALLQNKALKPKSLIISASGGAFRDTPLELIPIQNAQNALKHPNWSMGSKITIDSASMVNKLFEILETYWLFGASLKIDALIERSSIVHALVEFEDNSIIAHLASADMQLPISYAINPKLASLSASIKPLDLYALSAIKFEPISMERYTLWRYKDLLLENPKLGVVLNASNEVAMEKFLNQEIAFGGLIKTISQALESYAKTPFKLSDLDEVLALDREVRERFGSVARV.

NADPH-binding residues include threonine 7, glycine 8, serine 9, isoleucine 10, glycine 31, lysine 32, asparagine 33, and asparagine 113. Lysine 114 is a 1-deoxy-D-xylulose 5-phosphate binding site. An NADPH-binding site is contributed by glutamate 115. Residue aspartate 133 coordinates Mn(2+). 1-deoxy-D-xylulose 5-phosphate-binding residues include serine 134, glutamate 135, serine 158, and histidine 181. Glutamate 135 lines the Mn(2+) pocket. Glycine 187 is an NADPH binding site. 1-deoxy-D-xylulose 5-phosphate contacts are provided by serine 194, asparagine 199, lysine 200, and glutamate 203. Glutamate 203 serves as a coordination point for Mn(2+).

It belongs to the DXR family. Mg(2+) serves as cofactor. Mn(2+) is required as a cofactor.

The enzyme catalyses 2-C-methyl-D-erythritol 4-phosphate + NADP(+) = 1-deoxy-D-xylulose 5-phosphate + NADPH + H(+). Its pathway is isoprenoid biosynthesis; isopentenyl diphosphate biosynthesis via DXP pathway; isopentenyl diphosphate from 1-deoxy-D-xylulose 5-phosphate: step 1/6. Catalyzes the NADPH-dependent rearrangement and reduction of 1-deoxy-D-xylulose-5-phosphate (DXP) to 2-C-methyl-D-erythritol 4-phosphate (MEP). The polypeptide is 1-deoxy-D-xylulose 5-phosphate reductoisomerase (Helicobacter pylori (strain Shi470)).